A 218-amino-acid chain; its full sequence is Small ribosomal subunit protein uS3c (218 aa).

Residues 43–118 (IKNYVQKNMR…KLNIAITRIA (76 aa)) form the KH type-2 domain.

This sequence belongs to the universal ribosomal protein uS3 family. In terms of assembly, part of the 30S ribosomal subunit.

The protein resides in the plastid. Its subcellular location is the chloroplast. The protein is Small ribosomal subunit protein uS3c (rps3) of Buxus microphylla (Littleleaf boxwood).